Here is a 78-residue protein sequence, read N- to C-terminus: Putative membrane protein insertion efficiency factor (78 aa).

Belongs to the UPF0161 family.

It is found in the cell membrane. Functionally, could be involved in insertion of integral membrane proteins into the membrane. This is Putative membrane protein insertion efficiency factor from Limosilactobacillus reuteri (strain DSM 20016) (Lactobacillus reuteri).